The chain runs to 267 residues: Apolipoprotein A-I (267 aa).

The signal sequence occupies residues 1-18; sequence MKAAVLTLAVLFLTGSQA. Repeat copies occupy residues 68–89 and 90–111. The 10 X approximate tandem repeats stretch occupies residues 68-267; sequence LKLLDNWDSV…EEYTKKLNTQ (200 aa). Methionine 110 carries the methionine sulfoxide modification. The stretch at 112-122 is one 3; half-length repeat; it reads KDLEEVKAKVQ. 5 tandem repeats follow at residues 123–144, 145–166, 167–188, 189–210, and 211–232. Methionine sulfoxide is present on methionine 136. A 9; half-length repeat occupies 233–243; the sequence is PALEDLRQGLL. Repeat unit 10 spans residues 244-267; the sequence is PVLESFKVSFLSALEEYTKKLNTQ.

This sequence belongs to the apolipoprotein A1/A4/E family. Homodimer. Interacts with APOA1BP and CLU. Component of a sperm activating protein complex (SPAP), consisting of APOA1, an immunoglobulin heavy chain, an immunoglobulin light chain and albumin. Interacts with NDRG1. Interacts with SCGB3A2. Interacts with NAXE and YJEFN3. Glycosylated. Post-translationally, palmitoylated. In terms of processing, phosphorylation sites are present in the extracellular medium. Major protein of plasma HDL, also found in chylomicrons.

It localises to the secreted. In terms of biological role, participates in the reverse transport of cholesterol from tissues to the liver for excretion by promoting cholesterol efflux from tissues and by acting as a cofactor for the lecithin cholesterol acyltransferase (LCAT). As part of the SPAP complex, activates spermatozoa motility. In Pan paniscus (Pygmy chimpanzee), this protein is Apolipoprotein A-I (APOA1).